The sequence spans 417 residues: Testis-specific Y-encoded-like protein 5 (417 aa).

Residues 1 to 25 are compositionally biased toward basic residues; the sequence is MSGRSRGRKSSRAKNRGKGRAKARV. Disordered stretches follow at residues 1 to 55, 93 to 112, 127 to 202, and 391 to 417; these read MSGR…QVQA, AAGDHGQAAARPGPGKAASL, GTVG…EGSM, and KGKEKEGRQGPGKQPMETTQPGVSQSN. Residues 27–37 are compositionally biased toward basic and acidic residues; the sequence is PAPDDAPRDPD. The segment covering 93 to 103 has biased composition (low complexity); sequence AAGDHGQAAAR. Residues 182 to 191 show a composition bias toward basic and acidic residues; it reads GEEKKEERDA. Polar residues predominate over residues 406 to 417; it reads METTQPGVSQSN.

The protein belongs to the nucleosome assembly protein (NAP) family. As to quaternary structure, interacts with USP7.

Functionally, involved in modulation of cell growth and cellular response to gamma radiation probably via regulation of the Akt signaling pathway. Involved in regulation of p53/TP53. Suppresses p53/TP53 protein levels and promotes its ubiquitination; the function is dependent on USP7 and independent on MDM2. Proposed to displace p53/TP53 from interaction with USP7. This chain is Testis-specific Y-encoded-like protein 5 (TSPYL5), found in Homo sapiens (Human).